Consider the following 143-residue polypeptide: Nucleoside diphosphate kinase (143 aa).

ATP contacts are provided by lysine 11, phenylalanine 59, arginine 87, threonine 93, arginine 104, and asparagine 114. Histidine 117 (pros-phosphohistidine intermediate) is an active-site residue.

The protein belongs to the NDK family. As to quaternary structure, homotetramer. It depends on Mg(2+) as a cofactor.

It is found in the cytoplasm. It catalyses the reaction a 2'-deoxyribonucleoside 5'-diphosphate + ATP = a 2'-deoxyribonucleoside 5'-triphosphate + ADP. The catalysed reaction is a ribonucleoside 5'-diphosphate + ATP = a ribonucleoside 5'-triphosphate + ADP. In terms of biological role, major role in the synthesis of nucleoside triphosphates other than ATP. The ATP gamma phosphate is transferred to the NDP beta phosphate via a ping-pong mechanism, using a phosphorylated active-site intermediate. The sequence is that of Nucleoside diphosphate kinase from Shewanella sediminis (strain HAW-EB3).